A 388-amino-acid chain; its full sequence is Angiopoietin-related protein 5 (388 aa).

The signal sequence occupies residues Met-1–Gly-25. Asn-53 is a glycosylation site (N-linked (GlcNAc...) asparagine). Positions Leu-98–Val-123 form a coiled coil. The region spanning Arg-141–Tyr-383 is the Fibrinogen C-terminal domain. Residue Asn-238 is glycosylated (N-linked (GlcNAc...) asparagine). 2 disulfides stabilise this stretch: Cys-310/Cys-314 and Cys-324/Cys-338. The N-linked (GlcNAc...) asparagine glycan is linked to Asn-329.

In terms of tissue distribution, mainly expressed in adult heart.

It localises to the secreted. The polypeptide is Angiopoietin-related protein 5 (ANGPTL5) (Homo sapiens (Human)).